The sequence spans 1009 residues: MTAQKSKYFNRIMTMNTLLFSLLTVGFSQAYADVVLEKQVKITDDGLHFDGKDLNHGNIDSADPGEKYDFFFGPNISAHGDAVKTYKHYVFMTWYKGGKSERNVMLSRYNTQTQTIATIEFPHRHTGFRGNPLIGESHNTIGLAVSPNNGTIHMVYDLHAYDDNNHDGKFKDDFFRYSFSVENAADLPDDQFTLDKFVKDTSSISQGPDDYKHISMTGDIADKSNFARLTYPKFFTTTDGTLLLYMRLGGNNNGAYVFNRYDEETQTWSKFTKFNENNQKNFGNPYNWGLYGNMKYVNGKLRVGFQQRSSDNNDRYQYQNGVYYAYSDHPEGFGDWKNHKDDEITYPLVNSDEIKVLEPGDYISHQEANSVYIVGSFDWTVTKKGDVHFISKVRSTNRSRPDYEEEYLHSYKPAGADEFITTTDFTGASQIYTAGDNIYIVGLKNGRPYVERAKGGTNDFVRVYEATSGPVFDHGTLYIKDGKVYYYLMEKTSGNAMPLYLQIIDLDLESEANAPQVAFPSTSLTVEQGYEQLSLGIDATSSIEGRTIESVTLYLNDELVRTDTTVPYLFGHASKPHETGAMGWKDEHEPNPNPLGPGEHIFKAVAVDSEGDTGLATMRLTVQSNAPMVSFPTQLIEVDEGYEKLSVSVDASSSVEGRTIESVTLFINGEEVRTDTTIPYLWGHGSKPHETGAMGWREDHAPNPNPFLAGEYVFTAIATDSQGEQSETSMTLIVNGEATPPIVTWPNEVVTVTEGYKRLGITIEAEASSENATIESVTLYRNDELVRVDTKYKWNFGHSFAPYEFGAMGWLETHEPNPSPLLAGTHTFKVVAKDSTGLEGEAFMTLIVLPPAGPSISFDEPDIELMTGYESLSVSTYVATVNESVDIISVALFIDDVLVRENLEAPYVWGDANHPNELLSLEVGSYEFKAIARDTNDQVSEVSLLVSITLFGDFDGDNDVDRTDVRAFSSAIRSGEALDQRYDFNEDGVVDRSDTRGLTKICSRPRCAS.

Residues 1-32 form the signal peptide; the sequence is MTAQKSKYFNRIMTMNTLLFSLLTVGFSQAYA. 137–138 contributes to the substrate binding site; that stretch reads SH. The active-site Proton donor/acceptor is the His138. The Ca(2+) site is built by Asp200, Asp210, and Lys212. 2 residues coordinate substrate: Tyr291 and Arg308. Residues Asp311, Asp314, and Tyr316 each contribute to the Ca(2+) site. Residue Tyr372 coordinates substrate.

It belongs to the polysaccharide lyase 24 family.

Its function is as follows. Ulvan lyase involved in ulvan degradation. Ulvan is the main polysaccharide component of the Ulvales (green seaweed) cell wall. It is composed of disaccharide building blocks comprising 3-sulfated rhamnose (Rha3S) linked to D-glucuronic acid (GlcA), L-iduronic acid (IduA), or D-xylose (Xyl). Ulvan lyase catalyzes preferentially the endolytic cleavage of the glycosidic bond between Rha3S and the uronic acid GlcA, but not IduA, producing oligosaccharides that have unsaturated 4-deoxy-L-threo-hex-4-enopyranosiduronic acid (deltaUA) at the non-reducing end. The most abundant end products in the degradation of the ulvan polysaccharide were deltaUA-Rha3S disaccharides and deltaUA-Rha3S-IduA-Rha3S and deltaUA-Rha3S-Xyl-Rha3S tetrasaccharides. The chain is Ulvan lyase, long isoform (ullA) from Glaciecola sp. (strain KUL10).